The chain runs to 322 residues: Protein CCC1 (322 aa).

Over 1 to 99 (MSIVALKNAV…LGFFQSVDPR (99 aa)) the chain is Cytoplasmic. Positions 19–86 (GSGGTSELGG…RNGDNGSDNE (68 aa)) are disordered. Residues 26 to 53 (LGGSESTPLLRGSNSNSSRHDNLSSSSS) show a composition bias toward low complexity. 5 positions are modified to phosphoserine: serine 29, serine 53, serine 68, serine 71, and serine 83. Over residues 60–70 (NSAQDLENSPM) the composition is skewed to polar residues. A helical membrane pass occupies residues 100–120 (VISDLIIGLSDGLTVPFALTA). Topologically, residues 121–129 (GLSSLGDAK) are vacuolar. Residues 130–150 (LVITGGFAELISGAISMGLGG) form a helical membrane-spanning segment. The Cytoplasmic segment spans residues 151 to 236 (YLGAKSESDY…PAENRELISA (86 aa)). A helical membrane pass occupies residues 237–257 (VTIGGGYLLGGLVPLVPYFFV). Topologically, residues 258–259 (SD) are vacuolar. Residues 260–280 (VGTGLIYSIIVMVVTLFWFGY) traverse the membrane as a helical segment. Over 281–300 (VKTKLSMGSGSSTSKKVTEG) the chain is Cytoplasmic. A helical transmembrane segment spans residues 301–321 (VEMVVVGGVAAGAAWFFVKLL). A topological domain (vacuolar) is located at residue glycine 322.

This sequence belongs to the CCC1 family.

It localises to the golgi apparatus membrane. Its subcellular location is the vacuole membrane. The enzyme catalyses Fe(2+)(in) = Fe(2+)(out). In terms of biological role, has a role in both calcium and manganese homeostasis. Involved in the transfer of iron and Mn(2+) from the cytosol to the vacuole for storage of these metals. In Saccharomyces cerevisiae (strain ATCC 204508 / S288c) (Baker's yeast), this protein is Protein CCC1 (CCC1).